A 538-amino-acid polypeptide reads, in one-letter code: Bifunctional purine biosynthesis protein PurH (538 aa).

In terms of domain architecture, MGS-like spans 8–158; it reads IPAPDKVEIK…KNHAYVTILT (151 aa).

Belongs to the PurH family.

The enzyme catalyses (6R)-10-formyltetrahydrofolate + 5-amino-1-(5-phospho-beta-D-ribosyl)imidazole-4-carboxamide = 5-formamido-1-(5-phospho-D-ribosyl)imidazole-4-carboxamide + (6S)-5,6,7,8-tetrahydrofolate. It catalyses the reaction IMP + H2O = 5-formamido-1-(5-phospho-D-ribosyl)imidazole-4-carboxamide. The protein operates within purine metabolism; IMP biosynthesis via de novo pathway; 5-formamido-1-(5-phospho-D-ribosyl)imidazole-4-carboxamide from 5-amino-1-(5-phospho-D-ribosyl)imidazole-4-carboxamide (10-formyl THF route): step 1/1. It functions in the pathway purine metabolism; IMP biosynthesis via de novo pathway; IMP from 5-formamido-1-(5-phospho-D-ribosyl)imidazole-4-carboxamide: step 1/1. This chain is Bifunctional purine biosynthesis protein PurH, found in Rhizobium etli (strain CIAT 652).